Consider the following 316-residue polypeptide: tRNA dimethylallyltransferase (316 aa).

17 to 24 lines the ATP pocket; the sequence is GPTASGKT. 19-24 is a binding site for substrate; sequence TASGKT. Interaction with substrate tRNA regions lie at residues 42-45, 166-170, and 247-252; these read DSAL, QRLSR, and RCVGYR.

It belongs to the IPP transferase family. In terms of assembly, monomer. Requires Mg(2+) as cofactor.

It carries out the reaction adenosine(37) in tRNA + dimethylallyl diphosphate = N(6)-dimethylallyladenosine(37) in tRNA + diphosphate. Functionally, catalyzes the transfer of a dimethylallyl group onto the adenine at position 37 in tRNAs that read codons beginning with uridine, leading to the formation of N6-(dimethylallyl)adenosine (i(6)A). This Salmonella arizonae (strain ATCC BAA-731 / CDC346-86 / RSK2980) protein is tRNA dimethylallyltransferase.